Consider the following 236-residue polypeptide: ADTIVAVELDTYPNTDIGDPNYQHIGINIKSIRSKATTRWNVQDGKVGTAHISYNSVAKRLSAIVSYPGGSSATVSYDVDLNNILPEWVRVGLSASTGVYKETNTILSWSFTSKLKTNSTADAQSLHFTFNQFSQSPKDLILQGDASTDSDGNLQLTRVSNGSPQSNSVGRALYYAPVHVWDKSAVVASFDATFTFLIKSPDSDPADGIAFFIANTDSSIPHGSGGRLLGLFPDAN.

Mn(2+) is bound by residues E8 and D10. Residues D10, Y12, N14, and D19 each coordinate Ca(2+). N14 contributes to the a carbohydrate binding site. Mn(2+)-binding residues include D19 and H24. Residues 99-100 (VY), D207, and R227 contribute to the a carbohydrate site.

Belongs to the leguminous lectin family. Homotetramer; dimer of dimers. Post-translationally, concanavalin A-like lectins of the Diocleinae subtribe undergo proteolytic processing referred to as circular permutation. The propeptide is split into an N-terminal and a C-terminal part, the gamma and beta chain, respectively. These are then religated in beta-gamma order to form the mature alpha chain. The beta and gamma chains can often be detected in cell extracts. Residues 1-118 of the mature chain, as displayed here, probably constitute the beta chain in the propeptide, residues 119-236 the gamma chain.

Functionally, D-mannose/D-glucose-binding lectin that also binds derivative alpha-methyl-D-mannppyranoside. Has hemagglutinating activity towards rabbit erythrocytes. In Bionia pedicellata (Camptosema pedicellatum), this protein is Lectin CPL.